We begin with the raw amino-acid sequence, 338 residues long: F420-dependent glucose-6-phosphate dehydrogenase (338 aa).

D40 serves as a coordination point for coenzyme F420-(gamma-Glu)n. Catalysis depends on H41, which acts as the Proton donor. Coenzyme F420-(gamma-Glu)n is bound by residues T77 and T108–G109. E110 (proton acceptor) is an active-site residue. Coenzyme F420-(gamma-Glu)n contacts are provided by residues N113, G178–G179, and V181–V182. Residues T196, K199, K260, and R284 each coordinate substrate.

The protein belongs to the F420-dependent glucose-6-phosphate dehydrogenase family. In terms of assembly, homodimer.

The catalysed reaction is oxidized coenzyme F420-(gamma-L-Glu)(n) + D-glucose 6-phosphate + H(+) = 6-phospho-D-glucono-1,5-lactone + reduced coenzyme F420-(gamma-L-Glu)(n). Functionally, catalyzes the coenzyme F420-dependent oxidation of glucose 6-phosphate (G6P) to 6-phosphogluconolactone. In Gordonia bronchialis (strain ATCC 25592 / DSM 43247 / BCRC 13721 / JCM 3198 / KCTC 3076 / NBRC 16047 / NCTC 10667) (Rhodococcus bronchialis), this protein is F420-dependent glucose-6-phosphate dehydrogenase.